Consider the following 523-residue polypeptide: 2-isopropylmalate synthase (523 aa).

Positions 5-267 (VIIFDTTLRD…HTNINHHEIW (263 aa)) constitute a Pyruvate carboxyltransferase domain. Mn(2+) is bound by residues D14, H202, H204, and N238. Residues 392–523 (RLDYFSVQSG…QNKENNKETV (132 aa)) form a regulatory domain region.

It belongs to the alpha-IPM synthase/homocitrate synthase family. LeuA type 1 subfamily. Homodimer. Mn(2+) serves as cofactor.

Its subcellular location is the cytoplasm. The catalysed reaction is 3-methyl-2-oxobutanoate + acetyl-CoA + H2O = (2S)-2-isopropylmalate + CoA + H(+). Its pathway is amino-acid biosynthesis; L-leucine biosynthesis; L-leucine from 3-methyl-2-oxobutanoate: step 1/4. In terms of biological role, catalyzes the condensation of the acetyl group of acetyl-CoA with 3-methyl-2-oxobutanoate (2-ketoisovalerate) to form 3-carboxy-3-hydroxy-4-methylpentanoate (2-isopropylmalate). This is 2-isopropylmalate synthase from Salmonella typhi.